The following is a 713-amino-acid chain: Acetyl-coenzyme A synthetase 1 (713 aa).

Residues 1 to 39 are disordered; that stretch reads MSPSAVQSSKLEEQSSEIDKLKAKMSQSAATAQQKKEHE. The segment covering 10-22 has biased composition (basic and acidic residues); it reads KLEEQSSEIDKLK. CoA-binding positions include 248 to 251 and threonine 367; that span reads RGGK. Residues 443-445, 467-472, aspartate 559, and arginine 574 each bind ATP; these read GEP and DTYWQT. Positions 552 to 600 match the FACS motif; it reads PGYYFTGDGAAKDKDGYIWILGRVDDVVNVSGHRLSTAEIEAAIIEDPI. Serine 582 lines the CoA pocket. Arginine 585 contacts ATP. Arginine 650 is a binding site for CoA. The Microbody targeting signal signature appears at 711-713; that stretch reads VKL.

The protein belongs to the ATP-dependent AMP-binding enzyme family.

Its subcellular location is the microsome. It is found in the cytoplasm. The protein localises to the mitochondrion. The protein resides in the nucleus. The enzyme catalyses acetate + ATP + CoA = acetyl-CoA + AMP + diphosphate. Its function is as follows. Catalyzes the production of acetyl-CoA. Provides the acetyl-CoA source for histone acetylation in the nucleus. 'Aerobic' isozyme of acetyl-coenzyme A synthetase, which supports growth on nonfermentable carbon sources such as glycerol and ethanol. May be required for assimilation of ethanol and acetate. The protein is Acetyl-coenzyme A synthetase 1 (ACS1) of Saccharomyces cerevisiae (strain ATCC 204508 / S288c) (Baker's yeast).